An 835-amino-acid chain; its full sequence is Protein translocase subunit SecA 1 (835 aa).

ATP-binding positions include Gln-85, Gly-103 to Thr-107, and Asp-492. The segment at Val-788–Val-807 is disordered. Positions 819, 821, 830, and 831 each coordinate Zn(2+).

Belongs to the SecA family. Monomer and homodimer. Part of the essential Sec protein translocation apparatus which comprises SecA, SecYEG and auxiliary proteins SecDF. Other proteins may also be involved. Zn(2+) is required as a cofactor.

Its subcellular location is the cell membrane. It is found in the cytoplasm. The enzyme catalyses ATP + H2O + cellular proteinSide 1 = ADP + phosphate + cellular proteinSide 2.. Part of the Sec protein translocase complex. Interacts with the SecYEG preprotein conducting channel. Has a central role in coupling the hydrolysis of ATP to the transfer of proteins into and across the cell membrane, serving as an ATP-driven molecular motor driving the stepwise translocation of polypeptide chains across the membrane. The protein is Protein translocase subunit SecA 1 of Bacillus thuringiensis (strain Al Hakam).